Consider the following 332-residue polypeptide: Succinylglutamate desuccinylase (332 aa).

The Zn(2+) site is built by His59, Glu62, and His151. Glu215 is an active-site residue.

This sequence belongs to the AspA/AstE family. Succinylglutamate desuccinylase subfamily. It depends on Zn(2+) as a cofactor.

The catalysed reaction is N-succinyl-L-glutamate + H2O = L-glutamate + succinate. The protein operates within amino-acid degradation; L-arginine degradation via AST pathway; L-glutamate and succinate from L-arginine: step 5/5. In terms of biological role, transforms N(2)-succinylglutamate into succinate and glutamate. This chain is Succinylglutamate desuccinylase, found in Pseudomonas aeruginosa (strain LESB58).